The primary structure comprises 239 residues: MQKLELLYEGKAKRIYRTEAADMVWIEYKDSATAFNGEKKATITGKGRLNNEITTFLFRKLQEVGIETHFVKKLSDTEQLVKKVSIIPLEVVTRNVIAGSLSKRLGMEEGIPLAKPIVEFYYKDDDLGDPLVTEDHIRVLNAATLEQISTLREKALRINQVLIEHFASCRVRLIDFKLEFGITEEGKIVLADEISPDTCRLWDEESNEKFDKDVFRRDLGNLTEAYEEILKRLGGASHV.

Belongs to the SAICAR synthetase family.

It carries out the reaction 5-amino-1-(5-phospho-D-ribosyl)imidazole-4-carboxylate + L-aspartate + ATP = (2S)-2-[5-amino-1-(5-phospho-beta-D-ribosyl)imidazole-4-carboxamido]succinate + ADP + phosphate + 2 H(+). It functions in the pathway purine metabolism; IMP biosynthesis via de novo pathway; 5-amino-1-(5-phospho-D-ribosyl)imidazole-4-carboxamide from 5-amino-1-(5-phospho-D-ribosyl)imidazole-4-carboxylate: step 1/2. The chain is Phosphoribosylaminoimidazole-succinocarboxamide synthase from Bacillus cytotoxicus (strain DSM 22905 / CIP 110041 / 391-98 / NVH 391-98).